The following is a 386-amino-acid chain: MGHQAQHGTDDTEELLAAHRQLWCHALGYVKSMALKCALDLRIPDTIDRCGGSATLGELLAASEISASNHDYLRRVMRTLTAMRIFAASHDPAKADDAAAISYQLTPASRLLVSSSSSVDDAAGASKENTTTPSILPNIAHLVRPNTISLLFSMGEWMKDESAASVSLYETVHRQGMWACVEDDAANRASFYESMDADTRLVMQAVVRRCPHVFDGIKSLVDVGGGRGTAAAAVVAAFPHIQRCTVMDLPHVVAEAPAGTAGLSFHGGDMFEHIPSADALMLKWILHDWDEDKCIKIMERCKEAIGGKEAGGKVIIIDTVLGSRADDDDDDKTCRETYVLDLHILSFVNGAEREEHEWRRIFLAAGFRDYKITHTRGIPSIIEVFP.

4 residues coordinate S-adenosyl-L-methionine: Gly-224, Asp-248, Met-270, and Lys-283. His-287 (proton acceptor) is an active-site residue.

It belongs to the class I-like SAM-binding methyltransferase superfamily. Cation-independent O-methyltransferase family. COMT subfamily. In terms of tissue distribution, expressed in seedlings and newly formed crown roots. Highest expression in the scutellar node. Low to non detectable levels in cob, tassel and mature organs like husk or leaves.

The enzyme catalyses TRIBOA beta-D-glucoside + S-adenosyl-L-methionine = DIMBOA beta-D-glucoside + S-adenosyl-L-homocysteine + H(+). In terms of biological role, O-methyltransferase involved in the benzoxazinoid glucoside biosynthesis. Can use 2,4,7-trihydroxy-2H-1,4-benzoxazin-3(4H)-one 2-D-glucoside (TRIBOA-glucoside) as substrate, but not aglucone TRIBOA, caffeic acid, ferulic acid, apigenin or quercetin. This Zea mays (Maize) protein is TRIBOA-glucoside O-methyltransferase BX7 (BX7).